The primary structure comprises 892 residues: MTMTNRDDSEQLAWDFDAPESDGSSAAVVADEGLASLTPGSERWIAALQPTDADAMRLDKVDVASMSAEAAARLWARVAAWVESDQIAYYIDDAPVSSDAAYDARLRCLQSLEAQFPSLDSPQSPTHRVGGTFSNDFASVRHPSRMMSLDDVFSIEELREWYDGVLRGLDWPESKPLPMTCEVKIDGLALNLIYRNGVLEQGLTRGDGVTGEDITLNVRTISTIPQNLAGPEEDIPEFVEIRGEVFMRWDDFNKLNAENEDAGRAPFANPRNAAAGSLRQKDPRITATRRLSFYAHGIGSLRWGAGHAGNGHDVVNDQSEAYELYKKWGVPVSPHNREVTSFKEILDMIDYYGEHRGDIEHALDGIVVKVDDLGLQRSLGATSRAPRWAIAYKYPPEEVNTELLDITVQVGRTGRVTPVAVLKPVYVAGSTVSRTTLHNPFEVERKGVLIGDTVVVRKAGDVIPELVGPVLERRKGREGELRRFVMPTRCPSCGAELAPAKEGDKDIRCPNVESCPAQLTERIINLASRKAFDIEHLGDQSAIALTNPEEDRPDSIDTYAPNITEIVVKPGEEPEPYEPVAGLELPPMQTPVLSSEAGLFSLTSADLKDVRVWREAPIIEIHETVGSNGKIKKVRKRVGGSGLWHQVPAFWTAPTAARKRKEADIDETAEYPQYVVPDDAVVIREEIKVSRGGTSSVQPVYIRPAENTRKMLDEMDKARHADLWRVLVALSIRRLGPPTARTIASAFGTLDAIEHASVDELSQIDGIGSEIAESVVTWFTAAREPGNWRGAVLDAWKAAGVGVGQAQASGLPQTLAGKTVVVTGSLEGFSRDSAKEAIVLRGGKAAGSVSKKTDWVVVGENAGSKAAKAEELGIPMLNEDQFKQLLDTGTVE.

The segment at 1-23 (MTMTNRDDSEQLAWDFDAPESDG) is disordered. Residues 99–103 (DAAYD), 148–149 (SL), and glutamate 182 each bind NAD(+). Lysine 184 acts as the N6-AMP-lysine intermediate in catalysis. NAD(+)-binding residues include arginine 205, glutamate 244, lysine 369, and lysine 393. Zn(2+) is bound by residues cysteine 490, cysteine 493, cysteine 509, and cysteine 515. The BRCT domain maps to 810 to 892 (GLPQTLAGKT…KQLLDTGTVE (83 aa)).

The protein belongs to the NAD-dependent DNA ligase family. LigA subfamily. Mg(2+) serves as cofactor. It depends on Mn(2+) as a cofactor.

The enzyme catalyses NAD(+) + (deoxyribonucleotide)n-3'-hydroxyl + 5'-phospho-(deoxyribonucleotide)m = (deoxyribonucleotide)n+m + AMP + beta-nicotinamide D-nucleotide.. In terms of biological role, DNA ligase that catalyzes the formation of phosphodiester linkages between 5'-phosphoryl and 3'-hydroxyl groups in double-stranded DNA using NAD as a coenzyme and as the energy source for the reaction. It is essential for DNA replication and repair of damaged DNA. The sequence is that of DNA ligase from Bifidobacterium adolescentis (strain ATCC 15703 / DSM 20083 / NCTC 11814 / E194a).